Here is a 361-residue protein sequence, read N- to C-terminus: Molybdenum import ATP-binding protein ModC (361 aa).

The ABC transporter domain occupies 1–235 (MDGLRLRFRR…VDLPLALDDD (235 aa)). Residue 33–40 (GHSGSGKS) participates in ATP binding. The region spanning 296-361 (QSSILNRLPV…AQIKSVAVLA (66 aa)) is the Mop domain.

Belongs to the ABC transporter superfamily. Molybdate importer (TC 3.A.1.8) family. The complex is composed of two ATP-binding proteins (ModC), two transmembrane proteins (ModB) and a solute-binding protein (ModA).

Its subcellular location is the cell inner membrane. The enzyme catalyses molybdate(out) + ATP + H2O = molybdate(in) + ADP + phosphate + H(+). Functionally, part of the ABC transporter complex ModABC involved in molybdenum import. Responsible for energy coupling to the transport system. The protein is Molybdenum import ATP-binding protein ModC of Pseudomonas aeruginosa (strain ATCC 15692 / DSM 22644 / CIP 104116 / JCM 14847 / LMG 12228 / 1C / PRS 101 / PAO1).